We begin with the raw amino-acid sequence, 257 residues long: Undecaprenyl-diphosphatase (257 aa).

7 helical membrane-spanning segments follow: residues 42–62 (YVLFNLICHLGTLGSILYMFL), 76–96 (IFHIILGTLPLFPLVLILKPI), 103–123 (PQYLGLCFLFSAALLFSGVYF), 136–156 (CLTIGLFQAVAVLPGISRSGA), 172–192 (IQFSFLLAIPAILGGTFLEIW), 209–229 (QFLTGFITSFMIGCASLWAVI), and 237–257 (WVYFAWYCLFIGIATTLYFQM).

Belongs to the UppP family.

The protein localises to the cell inner membrane. It carries out the reaction di-trans,octa-cis-undecaprenyl diphosphate + H2O = di-trans,octa-cis-undecaprenyl phosphate + phosphate + H(+). Its function is as follows. Catalyzes the dephosphorylation of undecaprenyl diphosphate (UPP). Confers resistance to bacitracin. The polypeptide is Undecaprenyl-diphosphatase (Protochlamydia amoebophila (strain UWE25)).